Reading from the N-terminus, the 3011-residue chain is Genome polyprotein (3011 aa).

Residue serine 2 is modified to N-acetylserine; by host. Positions 2-23 are interaction with STAT1; that stretch reads STNPKPQRKTKRNTNRRPQDVK. Residues 2–58 are interaction with EIF2AK2/PKR; that stretch reads STNPKPQRKTKRNTNRRPQDVKFPGGGQIVGGVYLLPRRGPRVGVRATRKTSERSQP. The tract at residues 2–59 is interaction with DDX3X; that stretch reads STNPKPQRKTKRNTNRRPQDVKFPGGGQIVGGVYLLPRRGPRVGVRATRKTSERSQPR. The disordered stretch occupies residues 2-75; it reads STNPKPQRKT…PKARRPEGRS (74 aa). Residues 2 to 168 are Cytoplasmic-facing; sequence STNPKPQRKT…EDGVNYATGN (167 aa). Short sequence motifs (nuclear localization signal) lie at residues 5–13 and 38–43; these read PKPQRKTKR and PRRGPR. Residues 7–16 show a composition bias toward basic residues; sequence PQRKTKRNTN. Serine 53 bears the Phosphoserine; by host mark. Short sequence motifs (nuclear localization signal) lie at residues 58 to 64 and 66 to 71; these read PRGRRQP and PKARRP. The segment covering 58–68 has biased composition (basic residues); the sequence is PRGRRQPIPKA. Serine 99 carries the phosphoserine; by host modification. Residues 112–152 are important for endoplasmic reticulum and mitochondrial localization; sequence PRRRSRNLGKVIDTLTCGFADLMGYIPLVGAPLGGAARALA. Serine 116 is subject to Phosphoserine; by host PKA. The interaction with APOA2 stretch occupies residues 122 to 173; it reads VIDTLTCGFADLMGYIPLVGAPLGGAARALAHGVRVLEDGVNYATGNLPGCS. The interval 164–167 is important for lipid droplets localization; sequence YATG. The chain crosses the membrane as a helical span at residues 169–189; that stretch reads LPGCSFSIFLLALLSCLTVPA. The propeptide at 178–191 is ER anchor for the core protein, removed in mature form by host signal peptidase; it reads LLALLSCLTVPASA. The Lumenal portion of the chain corresponds to 190–358; it reads SAVGVRNSSG…AGAHWGVLAG (169 aa). N-linked (GlcNAc...) asparagine; by host glycans are attached at residues asparagine 196, asparagine 209, and asparagine 234. Residues 265–296 are important for fusion; that stretch reads IVGAAAFCSAMYVGDLCGSIFLVGQIFTFSPR. Asparagine 305 is a glycosylation site (N-linked (GlcNAc...) asparagine; by host). A helical membrane pass occupies residues 359 to 379; that stretch reads LAYYSMVGNWAKVVVVLLLFA. Residues 380–725 lie on the Lumenal side of the membrane; that stretch reads GVDAETRVTG…WEYVVLLFLL (346 aa). The interval 385–411 is HVR1; sequence TRVTGGAAGHTAFGFASFLAPGAKQKI. Residues asparagine 417, asparagine 423, asparagine 430, and asparagine 448 are each glycosylated (N-linked (GlcNAc...) (high mannose) asparagine; by host). Cystine bridges form between cysteine 429–cysteine 552, cysteine 452–cysteine 459, cysteine 486–cysteine 494, and cysteine 503–cysteine 508. The HVR2 stretch occupies residues 474–479; sequence HEGNAS. The tract at residues 480-493 is CD81-binding 1; the sequence is DDQRPYCWHYALRP. A glycan (N-linked (GlcNAc...) (high mannose) asparagine; by host) is linked at asparagine 532. A glycan (N-linked (GlcNAc...) asparagine; by host) is linked at asparagine 540. The CD81-binding 2 stretch occupies residues 544 to 551; sequence PPMGNWFG. An N-linked (GlcNAc...) (high mannose) asparagine; by host glycan is attached at asparagine 556. A disulfide bridge links cysteine 564 with cysteine 569. Asparagine 576 carries N-linked (GlcNAc...) (high mannose) asparagine; by host glycosylation. Intrachain disulfides connect cysteine 581/cysteine 585, cysteine 597/cysteine 620, and cysteine 607/cysteine 644. 2 N-linked (GlcNAc...) (high mannose) asparagine; by host glycosylation sites follow: asparagine 623 and asparagine 645. A disulfide bond links cysteine 652 and cysteine 677. The tract at residues 660-671 is PKR/eIF2-alpha phosphorylation homology domain (PePHD); that stretch reads AELSPLLLSTTQ. Residues 726-746 traverse the membrane as a helical segment; it reads LADARICACLWMMLLISQVEA. Residues 747–757 lie on the Lumenal side of the membrane; it reads ALENLIVLNAA. The chain crosses the membrane as a helical span at residues 758–778; sequence SLVGTHGIVPFFIFFCAAWYL. The Cytoplasmic segment spans residues 779–781; sequence KGK. Residues 782–803 form a helical membrane-spanning segment; it reads WAPGLAYSVYGMWPLLLLLLAL. Topologically, residues 804–813 are lumenal; that stretch reads PQRAYALDQE. The helical transmembrane segment at 814-834 threads the bilayer; that stretch reads LAASCGATVFICLAVLTLSPY. Over 835-838 the chain is Cytoplasmic; it reads YKQY. Residues 839–859 form a helical membrane-spanning segment; sequence MARGIWWLQYMLTRAEALLQV. The Lumenal segment spans residues 860–881; that stretch reads WVPPLNARGGRDGVVLLTCVLH. A helical transmembrane segment spans residues 882 to 902; sequence PHLLFEITKIMLAILGPLWIL. Residues 903 to 1026 form the Peptidase C18 domain; it reads QASLLKVPYF…ALTDKGWRLL (124 aa). Over 903 to 1657 the chain is Cytoplasmic; the sequence is QASLLKVPYF…CMSADLEVVT (755 aa). The interval 904–1206 is protease NS2-3; sequence ASLLKVPYFV…PVESLETTMR (303 aa). A lipid anchor (S-palmitoyl cysteine; by host) is attached at cysteine 922. Residues 929 to 949 are interaction with host SCPS1; it reads AGGQYVQMALLKLGAFAGTYI. Active-site for protease NS2 activity; shared with dimeric partner residues include histidine 952, glutamate 972, and cysteine 993. The Peptidase S29 domain occupies 1027–1208; sequence APITAYAQQT…ESLETTMRSP (182 aa). Residues histidine 1083 and aspartate 1107 each act as charge relay system; for serine protease NS3 activity in the active site. Residues cysteine 1123 and cysteine 1125 each coordinate Zn(2+). Catalysis depends on serine 1165, which acts as the Charge relay system; for serine protease NS3 activity. The Zn(2+) site is built by cysteine 1171 and histidine 1175. Residues 1217–1369 form the Helicase ATP-binding domain; it reads PTVPQSYQVA…SNIEEVALST (153 aa). 1230 to 1237 is a binding site for ATP; that stretch reads APTGSGKS. Residues serine 1237 and glutamate 1317 each contribute to the Mg(2+) site. A DECH box motif is present at residues 1316-1319; the sequence is DECH. An RNA-binding region spans residues 1486-1497; that stretch reads QRRGRTGRGKHG. Residues 1658 to 1678 traverse the membrane as a helical segment; it reads STWVLVGGVLAALAAYCLSTG. An NS3-binding region spans residues 1679 to 1690; sequence SVVIVGRIILSG. Residues 1679-1805 are Cytoplasmic-facing; that stretch reads SVVIVGRIIL…AVTSPLTTQQ (127 aa). A helical membrane pass occupies residues 1806–1824; sequence TLLFNILGGWVAAQLAAPA. Over 1825 to 1828 the chain is Lumenal; it reads AATA. A helical transmembrane segment spans residues 1829 to 1849; sequence FVGAGITGAVIGSVGLGKVLV. A topological domain (cytoplasmic) is located at residue aspartate 1850. Residues 1851–1871 traverse the membrane as a helical segment; it reads ILAGYGAGVAGALVAFKIMSG. Over 1872–1881 the chain is Lumenal; the sequence is EAPTAEDLVN. A helical transmembrane segment spans residues 1882 to 1902; that stretch reads LLPAILSPGALVVGVVCAAIL. Topologically, residues 1903 to 1972 are cytoplasmic; it reads RRHVGPGEGA…WISSDCTAPC (70 aa). 2 S-palmitoyl cysteine; by host lipidation sites follow: cysteine 1968 and cysteine 1972. Residues 1973–2002 lie within the membrane without spanning it; it reads AGSWLKDVWDWICEVLSDFKSWLKAKLMPQ. Topologically, residues 2003–2990 are cytoplasmic; it reads LPGIPFVSCQ…YHSVSHVRPR (988 aa). Residues cysteine 2011, cysteine 2029, cysteine 2031, and cysteine 2052 each contribute to the Zn(2+) site. Positions 2120 to 2208 are FKBP8-binding; it reads EFFTEVDGVR…ASSSASQLSA (89 aa). The tract at residues 2120–2332 is transcriptional activation; sequence EFFTEVDGVR…PVPPPRRKRT (213 aa). The segment at 2135–2139 is interaction with non-structural protein 4A; the sequence is PPCKP. The segment at 2189–2441 is interaction with host SKP2; the sequence is RLNRGSPPSL…TPCAAEETKL (253 aa). Position 2194 is a phosphoserine; by host; in p56 (serine 2194). A phosphoserine; by host; in p58 mark is found at serine 2197, serine 2201, serine 2204, serine 2207, and serine 2210. The segment at 2210-2249 is ISDR; it reads SLKATCTTHHDSPDADLITANLLWRQEMGGNITRVESENK. The segment at 2210–2275 is interaction with EIF2AK2/PKR; sequence SLKATCTTHH…REISVPAEIL (66 aa). Residues 2249–2306 form an NS4B-binding region; it reads KIVILDSFDPLVAEEDDREISVPAEILLKSKKFPPAMPIWARPDYNPPLVEPWKRPDY. An SH3-binding motif is present at residues 2322–2325; that stretch reads TPVP. The Nuclear localization signal signature appears at 2326 to 2334; it reads PPRRKRTVV. Residue lysine 2350 forms a Glycyl lysine isopeptide (Lys-Gly) (interchain with G-Cter in ubiquitin) linkage. A compositionally biased stretch (low complexity) spans 2352 to 2373; the sequence is FGSSTTSGVTSGEAAESSPAPS. The tract at residues 2352-2409 is disordered; that stretch reads FGSSTTSGVTSGEAAESSPAPSCDGELDSEAESYSSMPPLEGEPGDPDLSDGSWSTVS. The tract at residues 2354–2377 is V3; that stretch reads SSTTSGVTSGEAAESSPAPSCDGE. A phosphoserine; by host mark is found at serine 2449 and serine 2462. The 119-residue stretch at 2634 to 2752 folds into the RdRp catalytic domain; sequence PMGFSYDTRC…ICESAGVQED (119 aa). Mg(2+) contacts are provided by aspartate 2640, aspartate 2738, and aspartate 2739. The helical transmembrane segment at 2991-3011 threads the bilayer; it reads WFFWCLLLLSVGVGIYLLPNR.

It belongs to the hepacivirus polyprotein family. Homooligomer. Interacts with E1 (via C-terminus). Interacts with the non-structural protein 5A. Interacts (via N-terminus) with host STAT1 (via SH2 domain); this interaction results in decreased STAT1 phosphorylation and ubiquitin-mediated proteasome-dependent STAT1 degradation, leading to decreased IFN-stimulated gene transcription. Interacts with host STAT3; this interaction constitutively activates STAT3. Interacts with host LTBR receptor. Interacts with host TNFRSF1A receptor and possibly induces apoptosis. Interacts with host HNRPK. Interacts with host YWHAE. Interacts with host UBE3A/E6AP. Interacts with host DDX3X. Interacts with host APOA2. Interacts with host RXRA protein. Interacts with host SP110 isoform 3/Sp110b; this interaction sequesters the transcriptional corepressor SP110 away from the nucleus. Interacts with host CREB3 nuclear transcription protein; this interaction triggers cell transformation. Interacts with host ACY3. Interacts with host C1QR1. Interacts with host RBM24; this interaction, which enhances the interaction of the mature core protein with 5'-UTR, may inhibit viral translation and favor replication. Interacts with host EIF2AK2/PKR; this interaction induces the autophosphorylation of EIF2AK2. Part of the viral assembly initiation complex composed of NS2, E1, E2, NS3, NS4A, NS5A and the mature core protein. In terms of assembly, forms a heterodimer with envelope glycoprotein E2. Interacts with mature core protein. Interacts with protease NS2. The heterodimer E1/E2 interacts with host CLDN1; this interaction plays a role in viral entry into host cell. Interacts with host SPSB2 (via C-terminus). Part of the viral assembly initiation complex composed of NS2, E1, E2, NS3, NS4A, NS5A and the mature core protein. Interacts with host NEURL3; this interaction prevents E1 binding to glycoprotein E2. As to quaternary structure, forms a heterodimer with envelope glycoprotein E1. Interacts with host CD81 and SCARB1 receptors; these interactions play a role in viral entry into host cell. Interacts with host EIF2AK2/PKR; this interaction inhibits EIF2AK2 and probably allows the virus to evade the innate immune response. Interacts with host CD209/DC-SIGN and CLEC4M/DC-SIGNR. Interact with host SPCS1; this interaction is essential for viral particle assembly. Interacts with protease NS2. The heterodimer E1/E2 interacts with host CLDN1; this interaction plays a role in viral entry into host cell. Part of the viral assembly initiation complex composed of NS2, E1, E2, NS3, NS4A, NS5A and the mature core protein. Interacts with host SLC3A2/4F2hc; the interaction may facilitate viral entry into host cell. Interacts with human PLSCR1. Homohexamer. Homoheptamer. Interacts with protease NS2. In terms of assembly, homodimer. Interacts with host SPCS1; this interaction is essential for viral particle assembly. Interacts with envelope glycoprotein E1. Interacts with envelope glycoprotein E2. Interacts with viroporin p7. Interacts with serine protease/helicase NS3. Part of the replication complex composed of NS2, NS3, NS4A, NS4B, NS5A and the RNA-directed RNA polymerase embedded in an ER-derived membranous web. Part of the viral assembly initiation complex composed of NS2, E1, E2, NS3, NS4A, NS5A and the mature core protein. As to quaternary structure, interacts with protease NS2. Interacts with non-structural protein 4A; this interaction stabilizes the folding of NS3 serine protease. NS3-NS4A interaction is essential for NS3 activation and allows membrane anchorage of the latter. NS3/NS4A complex also prevents phosphorylation of host IRF3, thus preventing the establishment of dsRNA induced antiviral state. Interacts with host MAVS; this interaction leads to the cleavage and inhibition of host MAVS. Interacts with host TICAM1; this interaction leads to the cleavage and inhibition of host TICAM1. Interacts with host TANK-binding kinase/TBK1; this interaction results in the inhibition of the association between TBK1 and IRF3, which leads to the inhibition of IRF3 activation. Interacts with host RBM24. Part of the replication complex composed of NS2, NS3, NS4A, NS4B, NS5A and the RNA-directed RNA polymerase embedded in an ER-derived membranous web. Part of the viral assembly initiation complex composed of NS2, E1, E2, NS3, NS4A, NS5A and the mature core protein. Interacts with NS3 serine protease; this interaction stabilizes the folding of NS3 serine protease. NS3-NS4A interaction is essential for NS3 activation and allows membrane anchorage of the latter. Interacts with non-structural protein 5A (via N-terminus). Part of the replication complex composed of NS2, NS3, NS4A, NS4B, NS5A and the RNA-directed RNA polymerase embedded in an ER-derived membranous web. Part of the viral assembly initiation complex composed of NS2, E1, E2, NS3, NS4A, NS5A and the mature core protein. In terms of assembly, homomultimer. Interacts with non-structural protein NS5A. Interacts with host PLA2G4C; this interaction likely initiates the recruitment of replication complexes to lipid droplets. Interacts with host STING; this interaction disrupts the interaction between STING and TBK1 thereby suppressing the interferon signaling. Part of the replication complex composed of NS2, NS3, NS4A, NS4B, NS5A and the RNA-directed RNA polymerase embedded in an ER-derived membranous web. As to quaternary structure, monomer. Homodimer; dimerization is required for RNA-binding. Interacts with the mature core protein. Interacts (via N-terminus) with non-structural protein 4A. Interacts with non-structural protein 4B. Interacts (via region D2) with RNA-directed RNA polymerase. Part of the viral assembly initiation complex composed of NS2, E1, E2, NS3, NS4A, NS5A and the mature core protein. Part of the replication complex composed of NS2, NS3, NS4A, NS4B, NS5A and the RNA-directed RNA polymerase embedded in an ER-derived membranous web. Interacts with host GRB2. Interacts with host BIN1. Interacts with host PIK3R1. Interacts with host SRCAP. Interacts with host FKBP8. Interacts (via C-terminus) with host VAPB (via MSP domain). Interacts with host EIF2AK2/PKR; this interaction leads to disruption of EIF2AK2 dimerization by NS5A and probably allows the virus to evade the innate immune response. Interacts (via N-terminus) with host PACSIN2 (via N-terminus); this interaction attenuates protein kinase C alpha-mediated phosphorylation of PACSIN2 by disrupting the interaction between PACSIN2 and PRKCA. Interacts (via N-terminus) with host SRC kinase (via SH2 domain). Interacts with most Src-family kinases. Interacts with host IFI27 and SKP2; promotes the ubiquitin-mediated proteasomal degradation of NS5A. Interacts with host GPS2. Interacts with host TNFRSF21; this interaction allows the modulation by the virus of JNK, p38 MAPK, STAT3, and Akt signaling pathways in a DR6-dependent manner. Interacts (via N-terminus) with host CIDEB (via N-terminus); this interaction seems to regulate the association of HCV particles with APOE. Interacts with host CHKA/Choline Kinase-alpha; CHKA bridges host PI4KA and NS5A and potentiates NS5A-stimulated PI4KA activity, which then facilitates the targeting of the ternary complex to the ER for viral replication. Interacts with host SPSB2 (via C-terminus); this interaction targets NS5A for ubiquitination and degradation. Interacts with host RAB18; this interaction may promote the association of NS5A and other replicase components with lipid droplets. Interacts (via region D2) with host PPIA/CYPA; the interaction stimulates RNA-binding ability of NS5A and is dependent on the peptidyl-prolyl cis-trans isomerase activity of PPIA/CYPA. Interacts with host TRIM14; this interaction induces the degradation of NS5A. Homooligomer. Interacts with non-structural protein 5A. Interacts with host VAPB. Interacts with host PRK2/PKN2. Interacts with host HNRNPA1 and SEPT6; these interactions facilitate viral replication. Part of the replication complex composed of NS2, NS3, NS4A, NS4B, NS5A and the RNA-directed RNA polymerase. Zn(2+) serves as cofactor. It depends on Mg(2+) as a cofactor. Specific enzymatic cleavages in vivo yield mature proteins. The structural proteins, core, E1, E2 and p7 are produced by proteolytic processing by host signal peptidases. The core protein precursor is synthesized as a 23 kDa, which is retained in the ER membrane through the hydrophobic signal peptide. Cleavage by the signal peptidase releases the 21 kDa mature core protein. The cleavage of the core protein precursor occurs between aminoacids 176 and 188 but the exact cleavage site is not known. Some degraded forms of the core protein appear as well during the course of infection. The other proteins (p7, NS2, NS3, NS4A, NS4B, NS5A and NS5B) are cleaved by the viral proteases. Autoprocessing between NS2 and NS3 is mediated by the NS2 cysteine protease catalytic domain and regulated by the NS3 N-terminal domain. In terms of processing, phosphorylated by host PKC and PKA. Post-translationally, ubiquitinated; mediated by UBE3A and leading to core protein subsequent proteasomal degradation. Highly N-glycosylated. In terms of processing, palmitoylation is required for NS2/3 autoprocessing and E2 recruitment to membranes. Post-translationally, palmitoylated. This modification may play a role in its polymerization or in protein-protein interactions. Phosphorylated on serines in a basal form termed p56. p58 is a hyperphosphorylated form of p56. p56 and p58 coexist in the cell in roughly equivalent amounts. Hyperphosphorylation is dependent on the presence of NS4A. Host CSNK1A1/CKI-alpha or RPS6KB1 kinases may be responsible for NS5A phosphorylation. In terms of processing, tyrosine phosphorylation is essential for the interaction with host SRC. Post-translationally, the N-terminus is phosphorylated by host PRK2/PKN2.

The protein localises to the host endoplasmic reticulum membrane. It localises to the host mitochondrion membrane. Its subcellular location is the virion. It is found in the host cytoplasm. The protein resides in the host nucleus. The protein localises to the host lipid droplet. It localises to the virion membrane. Its subcellular location is the host mitochondrion. It is found in the host cell membrane. The protein resides in the host perinuclear region. It catalyses the reaction Hydrolysis of four peptide bonds in the viral precursor polyprotein, commonly with Asp or Glu in the P6 position, Cys or Thr in P1 and Ser or Ala in P1'.. The catalysed reaction is a ribonucleoside 5'-triphosphate + H2O = a ribonucleoside 5'-diphosphate + phosphate + H(+). It carries out the reaction ATP + H2O = ADP + phosphate + H(+). The enzyme catalyses RNA(n) + a ribonucleoside 5'-triphosphate = RNA(n+1) + diphosphate. Inhibited by the antiviral drug hexamethylene amiloride. Inhibition by amantadine appears to be genotype-dependent. Also inhibited by long-alkyl-chain iminosugar derivatives. Its activity is regulated as follows. Activity is up-regulated by PRK2/PKN2-mediated phosphorylation. Its function is as follows. Packages viral RNA to form a viral nucleocapsid, and promotes virion budding. Participates in the viral particle production as a result of its interaction with the non-structural protein 5A. Binds RNA and may function as a RNA chaperone to induce the RNA structural rearrangements taking place during virus replication. Modulates viral translation initiation by interacting with viral IRES and 40S ribosomal subunit. Affects various cell signaling pathways, host immunity and lipid metabolism. Prevents the establishment of cellular antiviral state by blocking the interferon-alpha/beta (IFN-alpha/beta) and IFN-gamma signaling pathways and by blocking the formation of phosphorylated STAT1 and promoting ubiquitin-mediated proteasome-dependent degradation of STAT1. Activates STAT3 leading to cellular transformation. Regulates the activity of cellular genes, including c-myc and c-fos. May repress the promoter of p53, and sequester CREB3 and SP110 isoform 3/Sp110b in the cytoplasm. Represses cell cycle negative regulating factor CDKN1A, thereby interrupting an important check point of normal cell cycle regulation. Targets transcription factors involved in the regulation of inflammatory responses and in the immune response: suppresses TNF-induced NF-kappa-B activation, and activates AP-1. Binds to dendritic cells (DCs) via C1QR1, resulting in down-regulation of T-lymphocytes proliferation. Alters lipid metabolism by interacting with hepatocellular proteins involved in lipid accumulation and storage. Induces up-regulation of FAS promoter activity, and thereby contributes to the increased triglyceride accumulation in hepatocytes (steatosis). In terms of biological role, forms a heterodimer with envelope glycoprotein E2, which mediates virus attachment to the host cell, virion internalization through clathrin-dependent endocytosis and fusion with host membrane. Fusion with the host cell is most likely mediated by both E1 and E2, through conformational rearrangements of the heterodimer required for fusion rather than a classical class II fusion mechanism. E1/E2 heterodimer binds host apolipoproteins such as APOB and ApoE thereby forming a lipo-viro-particle (LVP). APOE associated to the LVP allows the initial virus attachment to cell surface receptors such as the heparan sulfate proteoglycans (HSPGs), syndecan-1 (SDC1), syndecan-1 (SDC2), the low-density lipoprotein receptor (LDLR) and scavenger receptor class B type I (SCARB1). The cholesterol transfer activity of SCARB1 allows E2 exposure and binding of E2 to SCARB1 and the tetraspanin CD81. E1/E2 heterodimer binding on CD81 activates the epithelial growth factor receptor (EGFR) signaling pathway. Diffusion of the complex E1-E2-EGFR-SCARB1-CD81 to the cell lateral membrane allows further interaction with Claudin 1 (CLDN1) and occludin (OCLN) to finally trigger HCV entry. Functionally, forms a heterodimer with envelope glycoprotein E1, which mediates virus attachment to the host cell, virion internalization through clathrin-dependent endocytosis and fusion with host membrane. Fusion with the host cell is most likely mediated by both E1 and E2, through conformational rearrangements of the heterodimer required for fusion rather than a classical class II fusion mechanism. The interaction between envelope glycoprotein E2 and host apolipoprotein E/APOE allows the proper assembly, maturation and infectivity of the viral particles. This interaction is probably promoted via the up-regulation of cellular autophagy by the virus. E1/E2 heterodimer binds host apolipoproteins such as APOB and APOE thereby forming a lipo-viro-particle (LVP). APOE associated to the LVP allows the initial virus attachment to cell surface receptors such as the heparan sulfate proteoglycans (HSPGs), syndecan-1 (SDC1), syndecan-1 (SDC2), the low-density lipoprotein receptor (LDLR) and scavenger receptor class B type I (SCARB1). The cholesterol transfer activity of SCARB1 allows E2 exposure and binding of E2 to SCARB1 and the tetraspanin CD81. E1/E2 heterodimer binding on CD81 activates the epithelial growth factor receptor (EGFR) signaling pathway. Diffusion of the complex E1-E2-EGFR-SCARB1-CD81 to the cell lateral membrane allows further interaction with Claudin 1 (CLDN1) and occludin (OCLN) to finally trigger HCV entry. Inhibits host EIF2AK2/PKR activation, preventing the establishment of an antiviral state. Viral ligand for CD209/DC-SIGN and CLEC4M/DC-SIGNR, which are respectively found on dendritic cells (DCs), and on liver sinusoidal endothelial cells and macrophage-like cells of lymph node sinuses. These interactions allow the capture of circulating HCV particles by these cells and subsequent facilitated transmission to permissive cells such as hepatocytes and lymphocyte subpopulations. The interaction between E2 and host amino acid transporter complex formed by SLC3A2 and SLC7A5/LAT1 may facilitate viral entry into host cell. Ion channel protein that acts as a viroporin and plays an essential role in the assembly, envelopment and secretion of viral particles. Regulates the host cell secretory pathway, which induces the intracellular retention of viral glycoproteins and favors assembly of viral particles. Creates a pore in acidic organelles and releases Ca(2+) and H(+) in the cytoplasm of infected cells, leading to a productive viral infection. High levels of cytoplasmic Ca(2+) may trigger membrane trafficking and transport of viral ER-associated proteins to viroplasms, sites of viral genome replication. This ionic imbalance induces the assembly of the inflammasome complex, which triggers the maturation of pro-IL-1beta into IL-1beta through the action of caspase-1. Targets also host mitochondria and induces mitochondrial depolarization. In addition of its role as a viroporin, acts as a lipid raft adhesion factor. Its function is as follows. Cysteine protease required for the proteolytic auto-cleavage between the non-structural proteins NS2 and NS3. The N-terminus of NS3 is required for the function of NS2 protease (active region NS2-3). Promotes the initiation of viral particle assembly by mediating the interaction between structural and non-structural proteins. In terms of biological role, displays three enzymatic activities: serine protease with a chymotrypsin-like fold, NTPase and RNA helicase. NS3 serine protease, in association with NS4A, is responsible for the cleavages of NS3-NS4A, NS4A-NS4B, NS4B-NS5A and NS5A-NS5B. The NS3/NS4A complex prevents phosphorylation of host IRF3, thus preventing the establishment of dsRNA induced antiviral state. The NS3/NS4A complex induces host amino acid transporter component SLC3A2, thus contributing to HCV propagation. NS3 RNA helicase binds to RNA and unwinds both dsDNA and dsRNA in the 3' to 5' direction, and likely resolves RNA complicated stable secondary structures in the template strand. Binds a single ATP and catalyzes the unzipping of a single base pair of dsRNA. Inhibits host antiviral proteins TBK1 and IRF3 thereby preventing the establishment of an antiviral state. Cleaves host MAVS/CARDIF thereby preventing the establishment of an antiviral state. Cleaves host TICAM1/TRIF, thereby disrupting TLR3 signaling and preventing the establishment of an antiviral state. Functionally, induces a specific membrane alteration that serves as a scaffold for the virus replication complex. This membrane alteration gives rise to the so-called ER-derived membranous web that contains the replication complex. NS4B self-interaction contributes to its function in membranous web formation. Promotes host TRIF protein degradation in a CASP8-dependent manner thereby inhibiting host TLR3-mediated interferon signaling. Disrupts the interaction between STING and TBK1 contributing to the inhibition of interferon signaling. Phosphorylated protein that is indispensable for viral replication and assembly. Both hypo- and hyperphosphorylated states are required for the viral life cycle. The hyperphosphorylated form of NS5A is an inhibitor of viral replication. Involved in RNA-binding and especially in binding to the viral genome. Zinc is essential for RNA-binding. Participates in the viral particle production as a result of its interaction with the mature viral core protein. Its interaction with host VAPB may target the viral replication complex to vesicles. Down-regulates viral IRES translation initiation. Mediates interferon resistance, presumably by interacting with and inhibiting host EIF2AK2/PKR. Prevents BIN1-induced apoptosis. Acts as a transcriptional activator of some host genes important for viral replication when localized in the nucleus. Via the interaction with host PACSIN2, modulates lipid droplet formation in order to promote virion assembly. Modulates TNFRSF21/DR6 signaling pathway for viral propagation. Its function is as follows. RNA-dependent RNA polymerase that performs primer-template recognition and RNA synthesis during viral replication. Initiates RNA transcription/replication at a flavin adenine dinucleotide (FAD), resulting in a 5'- FAD cap on viral RNAs. In this way, recognition of viral 5' RNA by host pattern recognition receptors can be bypassed, thereby evading activation of antiviral pathways. The chain is Genome polyprotein from Homo sapiens (Human).